We begin with the raw amino-acid sequence, 418 residues long: Imidazolonepropionase (418 aa).

Fe(3+) is bound by residues His-79 and His-81. Zn(2+) is bound by residues His-79 and His-81. 4-imidazolone-5-propanoate contacts are provided by Arg-88, Tyr-151, and His-184. Position 151 (Tyr-151) interacts with N-formimidoyl-L-glutamate. His-249 provides a ligand contact to Fe(3+). His-249 serves as a coordination point for Zn(2+). 4-imidazolone-5-propanoate is bound at residue Gln-252. Residue Asp-324 coordinates Fe(3+). Residue Asp-324 coordinates Zn(2+). N-formimidoyl-L-glutamate is bound by residues Asn-326 and Gly-328. Thr-329 lines the 4-imidazolone-5-propanoate pocket.

The protein belongs to the metallo-dependent hydrolases superfamily. HutI family. Requires Zn(2+) as cofactor. Fe(3+) serves as cofactor.

The protein resides in the cytoplasm. The enzyme catalyses 4-imidazolone-5-propanoate + H2O = N-formimidoyl-L-glutamate. The protein operates within amino-acid degradation; L-histidine degradation into L-glutamate; N-formimidoyl-L-glutamate from L-histidine: step 3/3. In terms of biological role, catalyzes the hydrolytic cleavage of the carbon-nitrogen bond in imidazolone-5-propanoate to yield N-formimidoyl-L-glutamate. It is the third step in the universal histidine degradation pathway. This Colwellia psychrerythraea (strain 34H / ATCC BAA-681) (Vibrio psychroerythus) protein is Imidazolonepropionase.